Reading from the N-terminus, the 296-residue chain is Tyrosine recombinase XerC (296 aa).

Residues 2–85 (ADQASWLERF…ALKQFGQFLL (84 aa)) form the Core-binding (CB) domain. In terms of domain architecture, Tyr recombinase spans 106–285 (TLPKNLDPDS…DFQHLAKVYD (180 aa)). Active-site residues include Arg-145, Lys-169, His-237, Arg-240, and His-263. Catalysis depends on Tyr-272, which acts as the O-(3'-phospho-DNA)-tyrosine intermediate.

This sequence belongs to the 'phage' integrase family. XerC subfamily. As to quaternary structure, forms a cyclic heterotetrameric complex composed of two molecules of XerC and two molecules of XerD.

It localises to the cytoplasm. Its function is as follows. Site-specific tyrosine recombinase, which acts by catalyzing the cutting and rejoining of the recombining DNA molecules. The XerC-XerD complex is essential to convert dimers of the bacterial chromosome into monomers to permit their segregation at cell division. It also contributes to the segregational stability of plasmids. This chain is Tyrosine recombinase XerC, found in Shewanella amazonensis (strain ATCC BAA-1098 / SB2B).